The primary structure comprises 1038 residues: MEEPICYDTQKLLDDLSNLKVQEADNERPWSPEKTEIARVKVVKFLRSTQKIPAKHFIQIWEPLHSNICFVYSNTFLAEAAFTAENLPGLLFWRLDLDWTIEEPGNSLKILTQLSSVVQDSETLHRLSANKLRTSSKFGPVSIHFIITDWINMYEVALKDATTAIESPFTHARIGMLESAIAALTQHKFAIIYDMPFVQEGIRVLTQYAGWLLPFNVMWNQIQNSSLTPLTRALFIICMIDEYLTETPVHSISELFADTVNLIKDEAFVSIEEAVTNPRTVHESRISSALAYRDPYVFETSPGMLARRLRLDNGIWESNLLSLSTPGIHIEALLHLLNSDPEAETTSGSNVAEHTRGIWEKVQASTSPSMLISTLAESGFTRFSCKLLRRFIAHHTLAGFIHGSVVADEHITDFQQTLGCLALVGGLAYQLVETYAPTTEYVLTYTRTVNETEKRYETLLPALGLPPGGLGQIMRRCFAPRPLIESIQATRVILLNEISHAEARETTYFKQTHNQSSGALLPQAGQSAVREAVLTWFDLRMDSRWGITPPVDVGMTPPICVDPPATGLEAVMITEALKIAYPTEYNRSSVFVEPSFVPYIIATSTLDALSATIALSFDTRGIQQALSILQWARDYGSGTVPNADGYRTKLSALITILEPFTRTHPPVLLPSHVSTIDSLICELHRTVGIAVDLLPQHVRPLVPDRPSITNSVFLATLYYDELYGRWTRLDKTSQALVENFTSNALVVSRYMLMLQKFFACRFYPTPDLQAVGICNPKVERDEQFGVWRLNDLADAVGHIVGTIQGIRTQMRVGISSLRTIMADASSALRECENLMTKTSTSAIGPLFSTMASRYARFTQDQMDILMRVDKLTTGENIPGLANVEIFLNRWERIATACRHATAVPSAESIATVCNELRRGLKNIQEDRVNAPTSYMSHARNLEDHKAAVSFVMDSRQQFIVDSGPQMGAVLTSQCNIGTWENVNATFLHDNVKITTTVRDVISEAPTLIIGQRWLRPDEILSNVDLRLGVPGNTSGSDP.

The tract at residues 545-1038 (WGITPPVDVG…VPGNTSGSDP (494 aa)) is interaction with large tegument protein.

Belongs to the herpesviridae inner tegument protein family. Interacts (via C-terminus) with the large tegument protein/LTP (via N-terminus).

It is found in the virion tegument. The protein localises to the host cytoplasm. Its subcellular location is the host nucleus. It localises to the host Golgi apparatus. The protein resides in the host trans-Golgi network. In terms of biological role, plays an essential role in cytoplasmic secondary envelopment during viral egress. Interacts with the capsid via the large tegument protein/LTP and participates in its transport to the host trans-Golgi network (TGN) where secondary envelopment occurs. Modulates tegumentation and capsid accumulation at the viral assembly complex. The protein is Inner tegument protein (21) of Homo sapiens (Human).